A 131-amino-acid chain; its full sequence is D-ribose pyranase (131 aa).

Histidine 20 serves as the catalytic Proton donor. Substrate is bound by residues aspartate 28, histidine 98, and 120–122 (YAN).

It belongs to the RbsD / FucU family. RbsD subfamily. Homodecamer.

It localises to the cytoplasm. It carries out the reaction beta-D-ribopyranose = beta-D-ribofuranose. It functions in the pathway carbohydrate metabolism; D-ribose degradation; D-ribose 5-phosphate from beta-D-ribopyranose: step 1/2. In terms of biological role, catalyzes the interconversion of beta-pyran and beta-furan forms of D-ribose. This Bacillus anthracis (strain A0248) protein is D-ribose pyranase.